A 245-amino-acid chain; its full sequence is NAD-dependent protein deacylase (245 aa).

One can recognise a Deacetylase sirtuin-type domain in the interval 1-237 (MNFPYRNIVV…PKLVEELLAH (237 aa)). 13–32 (GAGISAESGIQTFRAQDGLW) contributes to the NAD(+) binding site. Substrate contacts are provided by Tyr57 and Arg60. Residue 94–97 (QNID) coordinates NAD(+). His112 functions as the Proton acceptor in the catalytic mechanism. 2 residues coordinate Zn(2+): Cys120 and Cys139. Residues 179-181 (GTS), 205-207 (NLE), and Ala223 each bind NAD(+).

It belongs to the sirtuin family. Class III subfamily. The cofactor is Zn(2+).

Its subcellular location is the cytoplasm. The enzyme catalyses N(6)-acetyl-L-lysyl-[protein] + NAD(+) + H2O = 2''-O-acetyl-ADP-D-ribose + nicotinamide + L-lysyl-[protein]. It catalyses the reaction N(6)-succinyl-L-lysyl-[protein] + NAD(+) + H2O = 2''-O-succinyl-ADP-D-ribose + nicotinamide + L-lysyl-[protein]. Its function is as follows. NAD-dependent lysine deacetylase and desuccinylase that specifically removes acetyl and succinyl groups on target proteins. Modulates the activities of several proteins which are inactive in their acylated form. The sequence is that of NAD-dependent protein deacylase from Vibrio vulnificus (strain CMCP6).